Consider the following 272-residue polypeptide: 3-methyl-2-oxobutanoate hydroxymethyltransferase (272 aa).

Aspartate 43 and aspartate 82 together coordinate Mg(2+). 3-methyl-2-oxobutanoate is bound by residues 43 to 44, aspartate 82, and lysine 112; that span reads DS. Glutamate 114 serves as a coordination point for Mg(2+). Catalysis depends on glutamate 179, which acts as the Proton acceptor.

It belongs to the PanB family. In terms of assembly, homodecamer; pentamer of dimers. Mg(2+) is required as a cofactor.

It is found in the cytoplasm. The catalysed reaction is 3-methyl-2-oxobutanoate + (6R)-5,10-methylene-5,6,7,8-tetrahydrofolate + H2O = 2-dehydropantoate + (6S)-5,6,7,8-tetrahydrofolate. The protein operates within cofactor biosynthesis; (R)-pantothenate biosynthesis; (R)-pantoate from 3-methyl-2-oxobutanoate: step 1/2. Its function is as follows. Catalyzes the reversible reaction in which hydroxymethyl group from 5,10-methylenetetrahydrofolate is transferred onto alpha-ketoisovalerate to form ketopantoate. This chain is 3-methyl-2-oxobutanoate hydroxymethyltransferase, found in Staphylococcus epidermidis (strain ATCC 35984 / DSM 28319 / BCRC 17069 / CCUG 31568 / BM 3577 / RP62A).